The sequence spans 1007 residues: MTREQLSLTVLARAGFVGLSSVRAELEELATLTGFPVDDLLPALLAAADPDTALRLALRLLRRAPDQAAWFLRSWKDARRLLRVIGASEGAAEFFLRQPVELASLHRPVTALPTAAELREDLLDAVGAVGGFASVAEEEAWTALRVRYRRRLVQLASFDLEQDDPVAGFDGVAAALSDLAGAALDASLAVARRQASGSGPGRFPEAEVRATRFAIIGMGKAGARELNYVSDVDVIYVTDGAEDAGVPPGRAVDIATRLAVLTQRGIQDPALEPGLWEVDSNLRPEGRDGALVRTLDSHLAYYDRWAKGWEFQALLKARSLAGDWELGERYVTALAPRVWSSASRENFVESVQRMRERVTDNIPDGDLHYQLKLGPGGLRDVEFTVQLLQLVHGQTDGLVRQRDTLSALAALAGQSYIGREEAAAFSHDYRTLRLLEHRLQLRHLRRTHLMPRDEVEVRILARATGLAASAGQLLTQWNEIKHRVRGLHERLFYRPLLSAVAAMPNEDARLSGEAGLTSEQAQARLAAIGFRDPRGALAHIAALTAGVSRRATIQRHLLPVMLQWFSAGADPDYGLLSFRRLSDDLGGTHWYLRMLRDSSGAAERLTRVLSGSRFVAELLGRIPESVAWLESEEELRPRAPELLREETAAILARHESAETAAAALRAVRRREVLRLAFSGILGFSTIEELARGLSAVTENLLTGVLGAIRAARDDAAALEFAIIGMGRFGGRELGFGSDADIMYVFRPLAAGQDAAHRAATAIVADLNRLTEDSALPVDLDIGLRPEGKNGPSVRSLDSYRAYYARWSLAWEAQALLRARGVAGDSALIGDFETLADEVRYPASIGEQAVREVKRIKARIENERLPQGADPARHLKLGRGSLSDVEWFVQLVQLQHAAAHPALRTPSTLDALAVAAGEGFVSGEDAARLRAAWVFASRARSAMTLWTNKTADVLPFDRVVLDGVARLLEYPPGAASRMEEDYLAVTRRARAVFEREFYGPPQRPATTA.

The segment at 1 to 496 is adenylyl removase; sequence MTREQLSLTV…LHERLFYRPL (496 aa). Residues 505–1007 form an adenylyl transferase region; that stretch reads NEDARLSGEA…GPPQRPATTA (503 aa).

The protein belongs to the GlnE family. The cofactor is Mg(2+).

It catalyses the reaction [glutamine synthetase]-O(4)-(5'-adenylyl)-L-tyrosine + phosphate = [glutamine synthetase]-L-tyrosine + ADP. It carries out the reaction [glutamine synthetase]-L-tyrosine + ATP = [glutamine synthetase]-O(4)-(5'-adenylyl)-L-tyrosine + diphosphate. Involved in the regulation of glutamine synthetase GlnA, a key enzyme in the process to assimilate ammonia. When cellular nitrogen levels are high, the C-terminal adenylyl transferase (AT) inactivates GlnA by covalent transfer of an adenylyl group from ATP to specific tyrosine residue of GlnA, thus reducing its activity. Conversely, when nitrogen levels are low, the N-terminal adenylyl removase (AR) activates GlnA by removing the adenylyl group by phosphorolysis, increasing its activity. The regulatory region of GlnE binds the signal transduction protein PII (GlnB) which indicates the nitrogen status of the cell. This chain is Bifunctional glutamine synthetase adenylyltransferase/adenylyl-removing enzyme, found in Leifsonia xyli subsp. xyli (strain CTCB07).